A 416-amino-acid chain; its full sequence is Esterase FrsA (416 aa).

Residues 19–39 (ETSTLVRRTRHDQETQGLHST) form a disordered region.

Belongs to the FrsA family.

It carries out the reaction a carboxylic ester + H2O = an alcohol + a carboxylate + H(+). Its function is as follows. Catalyzes the hydrolysis of esters. This is Esterase FrsA from Pectobacterium atrosepticum (strain SCRI 1043 / ATCC BAA-672) (Erwinia carotovora subsp. atroseptica).